A 517-amino-acid polypeptide reads, in one-letter code: MIGKAFIILSLLNELPTPTAAQAAQGGALGKDVWLPLAKFTATAAKIPGRAAKLLQDRSAQIVNLMKLQVQADICLNKAASEVSALGWQALAVAIAADIGSLQSLQQQRSEEAIAAAAAAEFARGHAAEFFKVAAAVQSAANSGCLTTNNKGGAAGSVINGFSTLGTAEQPAIGATSTAHVGDDITAITTTGFSDLAATDGIRTDSLTADTNCVLFKGGSDGPLTTANFGQSIPFAGGYLTRNPTANTASSADGTDFVSNPEDSKIAGIKVYRDAHAAAAKIRTAATFGSTFTDFKKLDQAKKSVHLRAAVKNIILGKPDGSVDDLSGEIDTKINQVFGEDQETFHSRFWDQLTKVKVEKAASGQEETTLDAITSFAALSRARTYYSTKVIKGLRDKISSLEIKNSKTEVKVTDADCNKHQSKDKCAAPCKWNENTTDINKKCSLDPVKATEQQAAQTAGAGEGAAGTTTDKCKDKKKDDCKSPDCKWEGETCKDSSILLNKQFALMVSAAFVALLF.

A signal peptide spans 1-21; sequence MIGKAFIILSLLNELPTPTAA. 2 disulfides stabilise this stretch: C417–C430 and C426–C443. N435 carries N-linked (GlcNAc...) asparagine glycosylation. The span at 454–470 shows a compositional bias: low complexity; sequence QAAQTAGAGEGAAGTTT. A disordered region spans residues 454 to 487; the sequence is QAAQTAGAGEGAAGTTTDKCKDKKKDDCKSPDCK. Over residues 471–487 the composition is skewed to basic and acidic residues; it reads DKCKDKKKDDCKSPDCK. A lipid anchor (GPI-anchor amidated aspartate) is attached at D495. Residues 496–517 constitute a propeptide, removed in mature form; the sequence is SSILLNKQFALMVSAAFVALLF.

The protein resides in the cell membrane. VSG forms a coat on the surface of the parasite. The trypanosome evades the immune response of the host by expressing a series of antigenically distinct VSGs from an estimated 1000 VSG genes. In Trypanosoma brucei rhodesiense, this protein is Variant surface glycoprotein MVAT5.